A 348-amino-acid chain; its full sequence is Isopentenyl-diphosphate delta-isomerase (348 aa).

Residue 14–15 (RK) coordinates substrate. FMN-binding positions include S72, 73 to 75 (SMT), S103, and N131. 103–105 (SQR) serves as a coordination point for substrate. Q166 provides a ligand contact to substrate. Residue E167 coordinates Mg(2+). Residues K198, T228, 278 to 280 (GIR), and 299 to 300 (AR) each bind FMN.

It belongs to the IPP isomerase type 2 family. Homooctamer. Dimer of tetramers. FMN is required as a cofactor. The cofactor is NADPH. It depends on Mg(2+) as a cofactor.

The protein resides in the cytoplasm. The catalysed reaction is isopentenyl diphosphate = dimethylallyl diphosphate. Its function is as follows. Involved in the biosynthesis of isoprenoids. Catalyzes the 1,3-allylic rearrangement of the homoallylic substrate isopentenyl (IPP) to its allylic isomer, dimethylallyl diphosphate (DMAPP). This is Isopentenyl-diphosphate delta-isomerase from Synechococcus sp. (strain ATCC 27144 / PCC 6301 / SAUG 1402/1) (Anacystis nidulans).